The sequence spans 290 residues: Picrinine-N-methytransferase (290 aa).

The tract at residues 71-80 (MLDVGCGIGG) is SAM motif I. Positions 133-139 (DGTFDLV) match the Vacuolar targeting signal motif. The segment at 134–142 (GTFDLVFTI) is SAM motif II. Residues 161-170 (VAAPGAPIVI) form an SAM motif III region.

This sequence belongs to the class I-like SAM-binding methyltransferase superfamily. gTMT family. Homodimer. Accumulates in tissues actively synthesizing monoterpenoid indole alkaloids (MIAs) (at protein level). Mainly expressed in young leaves and, to a lower extent, in roots and stems.

The protein resides in the vacuole membrane. It catalyses the reaction picrinine + S-adenosyl-L-methionine = ervincine + S-adenosyl-L-homocysteine + H(+). It participates in alkaloid biosynthesis; vindoline biosynthesis. Its function is as follows. S-adenosyl-L-methionine-dependent N-methyltransferase involved in the biosynthesis of biologically active monoterpenoid indole alkaloids (MIAs) natural products including vindoline. Catalyzes the conversion of picrinine to N-methylpicrinine (ervincine). Also accepts, with low efficiency, 21-hydroxycyclolochnericine and norajmaline as substrates. The protein is Picrinine-N-methytransferase of Rauvolfia serpentina (Serpentine wood).